Reading from the N-terminus, the 360-residue chain is Protein RecA (360 aa).

ATP is bound at residue 65–72; sequence GPESSGKT.

The protein belongs to the RecA family.

Its subcellular location is the cytoplasm. Its function is as follows. Can catalyze the hydrolysis of ATP in the presence of single-stranded DNA, the ATP-dependent uptake of single-stranded DNA by duplex DNA, and the ATP-dependent hybridization of homologous single-stranded DNAs. It interacts with LexA causing its activation and leading to its autocatalytic cleavage. This chain is Protein RecA, found in Tolumonas auensis (strain DSM 9187 / NBRC 110442 / TA 4).